Reading from the N-terminus, the 961-residue chain is FYVE, RhoGEF and PH domain-containing protein 1 (961 aa).

Residues 1 to 11 (MHGHRAPGGAG) show a composition bias toward gly residues. Positions 1–353 (MHGHRAPGGA…DEEEEEEKDR (353 aa)) are disordered. Low complexity predominate over residues 27–38 (PPACADSDPGAS). Residue Ser48 is modified to Phosphoserine. Positions 125–135 (PHPEGPQRLRS) are enriched in basic and acidic residues. Pro residues-rich tracts occupy residues 156–165 (GPKPQVPPKP) and 172–190 (RMPP…PLPA). The SH3-binding signature appears at 171–187 (PRMPPPLEPIPPPPSRP). Low complexity predominate over residues 199-213 (APRAEASPSSAAVSS). Ser205 carries the phosphoserine modification. Pro residues predominate over residues 231–255 (VPGPSPGPPEPVMLPQPTSQPPVPQ). The span at 273 to 284 (RDGEKVPNRDSG) shows a compositional bias: basic and acidic residues. 2 stretches are compositionally biased toward low complexity: residues 285 to 294 (IDSISSPSNS) and 316 to 325 (ALASVPVALA). Over residues 335–351 (VDSDLEEEDDEEEEEEK) the composition is skewed to acidic residues. One can recognise a DH domain in the interval 373–561 (KVFHIANELL…ATAAEHSNAA (189 aa)). The PH 1 domain maps to 590–689 (ELIKEGHILK…WVQAINSTLL (100 aa)). The segment at 702 to 726 (NSTNREDEDTPPNSPNVDLGKRAPT) is disordered. Thr711 is modified (phosphothreonine). The residue at position 715 (Ser715) is a Phosphoserine. An FYVE-type zinc finger spans residues 730–790 (EKEVTMCMRC…VCTDCYVALH (61 aa)). Positions 736, 739, 753, 756, 761, 764, 782, and 785 each coordinate Zn(2+). A PH 2 domain is found at 821–921 (NSVICSFLHY…WMAVLGRAGR (101 aa)). The tract at residues 925–961 (FCPGPTLSEDREMEEAPVAALGATAEPPESPQTRDKT) is disordered.

Interacts with DBNL/ABP1 and CTTN. May interact with CCPG1. Binds CDC42. In terms of tissue distribution, expressed in fetal heart, brain, lung, kidney and placenta. Less expressed in liver; adult heart, brain, lung, pancreas and skeletal muscle.

The protein resides in the cytoplasm. It is found in the cell projection. The protein localises to the lamellipodium. Its subcellular location is the ruffle. It localises to the cytoskeleton. Its function is as follows. Activates CDC42, a member of the Ras-like family of Rho- and Rac proteins, by exchanging bound GDP for free GTP. Plays a role in regulating the actin cytoskeleton and cell shape. The polypeptide is FYVE, RhoGEF and PH domain-containing protein 1 (FGD1) (Homo sapiens (Human)).